Reading from the N-terminus, the 902-residue chain is Adhesion G-protein coupled receptor D1 (902 aa).

An N-terminal signal peptide occupies residues 1–25 (MKKLLPLCCWHSWLLLFYCDFQVRG). The Extracellular segment spans residues 26 to 598 (AHTRSHVHPG…GHQVALSSIS (573 aa)). 15 N-linked (GlcNAc...) asparagine glycosylation sites follow: Asn68, Asn76, Asn83, Asn89, Asn121, Asn183, Asn217, Asn310, Asn330, Asn337, Asn347, Asn422, Asn504, Asn529, and Asn561. One can recognise a Pentraxin (PTX) domain in the interval 111-304 (KGVTFLYYRK…VNTMAPTNAY (194 aa)). One can recognise a GAIN-B domain in the interval 399 to 585 (QVAIVGSSSM…AILMQVVPLE (187 aa)). 2 disulfides stabilise this stretch: Cys538-Cys567 and Cys555-Cys569. Residues 538-585 (CAFLDFSSGEGIWSNQGCALTEGNLSYSICRCTHLTNFAILMQVVPLE) are GPS. Residues 574 to 582 (NFAILMQVV) are stachel. Position 591 (Gln591) interacts with 17beta-hydroxy-5alpha-androstan-3-one. A helical membrane pass occupies residues 599-619 (YIGCSLSVLCLAITLVTFAVL). Topologically, residues 620 to 630 (SSVSTIRNQRY) are cytoplasmic. The chain crosses the membrane as a helical span at residues 631–651 (HIHANLSCAVLVAQVLLLISF). The Extracellular portion of the chain corresponds to 652–661 (RFEPGTAPCQ). A disulfide bridge connects residues Cys660 and Cys732. The chain crosses the membrane as a helical span at residues 662–682 (VLAMLLHYFFLSAFAWMLVEG). At 683–702 (LHLYSMVIKVFGSEDSKHRY) the chain is on the cytoplasmic side. The helical transmembrane segment at 703 to 723 (YYGIGWGFPLLICIISIVFAM) threads the bilayer. Residues 724–739 (DSYGTSKNCWLSLGNG) are Extracellular-facing. The helical transmembrane segment at 740-760 (AIWAFVAPALFIIVVNIGILI) threads the bilayer. Residues 761–788 (AVTRVISQISAENYKIHGDPSAFKLTAK) lie on the Cytoplasmic side of the membrane. The helical transmembrane segment at 789 to 809 (AVAVLLPILGTSWVFGVLAVN) threads the bilayer. Residues 810–812 (NQA) are Extracellular-facing. Residues 813–833 (MVFQYMFAILNSLQGFFIFLF) traverse the membrane as a helical segment. Residues 834 to 902 (HCLLNSEVRA…SGHRVDLSAV (69 aa)) lie on the Cytoplasmic side of the membrane. The segment at 865 to 902 (KPFSSDIMNGTRPATGSTRLSPWDKSSHSGHRVDLSAV) is disordered. Residues 870 to 884 (DIMNGTRPATGSTRL) show a composition bias toward polar residues. The segment covering 889–902 (KSSHSGHRVDLSAV) has biased composition (basic and acidic residues).

This sequence belongs to the G-protein coupled receptor 2 family. Adhesion G-protein coupled receptor (ADGR) subfamily. Heterodimer of 2 chains generated by proteolytic processing; the large extracellular N-terminal fragment and the membrane-bound C-terminal fragment predominantly remain associated and non-covalently linked. Interacts with ESYT1; interaction takes place in absence of cytosolic calcium and inhibits the G protein-coupled receptor activity of ADGRD1. Autoproteolytically processed at the GPS region of the GAIN-B domain; this cleavage modulates receptor activity. Cleavage takes place early in the secretory pathway before N-glycosylation.

It is found in the cell membrane. With respect to regulation, forms a heterodimer of 2 chains generated by proteolytic processing that remain associated through non-covalent interactions mediated by the GAIN-B domain. In the inactivated receptor, the Stachel sequence (also named stalk) is embedded in the GAIN-B domain, where it adopts a beta-strand conformation. On activation, the Stachel moves into the 7 transmembrane region and adopts a twisted hook-shaped configuration that forms contacts within the receptor, leading to coupling of a G-alpha protein, which activates signaling. The cleaved GAIN-B and N-terminal domains can then dissociate from the rest of the receptor. Interaction with ESYT1 in absence of cytosolic calcium inhibits the G protein-coupled receptor activity; interaction and inhibition is relieved when cytosolic calcium increases. Its function is as follows. Adhesion G-protein coupled receptor (aGPCR) for androgen hormone 5alpha-dihydrotestosterone (5alpha-DHT), also named 17beta-hydroxy-5alpha-androstan-3-one, the most potent hormone among androgens. Also activated by methenolone drug. Ligand binding causes a conformation change that triggers signaling via guanine nucleotide-binding proteins (G proteins) and modulates the activity of downstream effectors, such as adenylate cyclase. ADGRD1 is coupled to G(s) G proteins and mediates activation of adenylate cyclase activity. Acts as a 5alpha-DHT receptor in muscle cells, thereby increasing intracellular cyclic AMP (cAMP) levels and enhancing muscle strength. The protein is Adhesion G-protein coupled receptor D1 (ADGRD1) of Bos taurus (Bovine).